The sequence spans 59 residues: UPF0391 membrane protein LPC_1949 (59 aa).

Helical transmembrane passes span 5–25 (ALIF…GIAV) and 30–50 (IAKI…IMGL).

It belongs to the UPF0391 family.

The protein localises to the cell membrane. This is UPF0391 membrane protein LPC_1949 from Legionella pneumophila (strain Corby).